Here is a 454-residue protein sequence, read N- to C-terminus: MSNTDTIVAQATPPGRGGVGILRVSGQAAAEVAHAVLGKLPKPRHADYLPFRDTNGTTLDQGIALWFPGPNSFTGEDVLELQGHGGPVILDLLLQRILTLPNVRIARPGEFSERAFLNDKLDLAQAEAIADLIDASSEQAARSALNSLQGVFSTRINQLVEALTHLRIYVEAAIDFPDEEIDFLSDGKIEAQLNGVMADLDAVRTEAHQGSLLREGMKVVIAGRPNAGKSSLLNALAGREAAIVTAIAGTTRDVLREHIHIDGMPLHIIDTAGLRDASDEVERIGIERAWQEIEQADRVLFMVDGTTTQATEPEQIWPEFMARLPKTLPITVVRNKADVTGETLGIADVNTHSLIRLSARTGEGVDTLRDHLKQSMGFTSNTEGGFLARRRHLQALELAAQHLIQGKEQLVSAYAGELLAEELRLAQQSLSEITGEFTSDDLLGRIFSSFCIGK.

Residues Arg-23, Glu-80, and Lys-120 each contribute to the (6S)-5-formyl-5,6,7,8-tetrahydrofolate site. Residues 216-377 enclose the TrmE-type G domain; sequence GMKVVIAGRP…LRDHLKQSMG (162 aa). Asn-226 is a binding site for K(+). Residues 226 to 231, 245 to 251, 270 to 273, 335 to 338, and 358 to 360 contribute to the GTP site; these read NAGKSS, TAIAGTT, DTAG, NKAD, and SAR. Mg(2+) is bound at residue Ser-230. Thr-245, Ile-247, and Thr-250 together coordinate K(+). Residue Thr-251 participates in Mg(2+) binding. Lys-454 serves as a coordination point for (6S)-5-formyl-5,6,7,8-tetrahydrofolate.

It belongs to the TRAFAC class TrmE-Era-EngA-EngB-Septin-like GTPase superfamily. TrmE GTPase family. In terms of assembly, homodimer. Heterotetramer of two MnmE and two MnmG subunits. It depends on K(+) as a cofactor.

It is found in the cytoplasm. In terms of biological role, exhibits a very high intrinsic GTPase hydrolysis rate. Involved in the addition of a carboxymethylaminomethyl (cmnm) group at the wobble position (U34) of certain tRNAs, forming tRNA-cmnm(5)s(2)U34. The sequence is that of tRNA modification GTPase MnmE from Pectobacterium atrosepticum (strain SCRI 1043 / ATCC BAA-672) (Erwinia carotovora subsp. atroseptica).